We begin with the raw amino-acid sequence, 246 residues long: AA9 family lytic polysaccharide monooxygenase D (246 aa).

Residues methionine 1–serine 19 form the signal peptide. Residue histidine 20 coordinates Cu(2+). Cysteines 78 and 196 form a disulfide. Asparagine 86, asparagine 141, and asparagine 156 each carry an N-linked (GlcNAc...) asparagine glycan. O2 is bound by residues histidine 182 and glutamine 191. Tyrosine 193 contributes to the Cu(2+) binding site. A glycan (N-linked (GlcNAc...) asparagine) is linked at asparagine 235.

The protein belongs to the polysaccharide monooxygenase AA9 family. It depends on Cu(2+) as a cofactor.

It is found in the secreted. The catalysed reaction is [(1-&gt;4)-beta-D-glucosyl]n+m + reduced acceptor + O2 = 4-dehydro-beta-D-glucosyl-[(1-&gt;4)-beta-D-glucosyl]n-1 + [(1-&gt;4)-beta-D-glucosyl]m + acceptor + H2O.. Functionally, lytic polysaccharide monooxygenase (LPMO) that depolymerizes crystalline and amorphous polysaccharides via the oxidation of scissile alpha- or beta-(1-4)-glycosidic bonds, yielding C1 and C4 oxidation products. Catalysis by LPMOs requires the reduction of the active-site copper from Cu(II) to Cu(I) by a reducing agent and H(2)O(2) or O(2) as a cosubstrate. This chain is AA9 family lytic polysaccharide monooxygenase D, found in Botryotinia fuckeliana (strain B05.10) (Noble rot fungus).